The sequence spans 357 residues: tRNA pseudouridine synthase D (357 aa).

Residue aspartate 76 is the Nucleophile of the active site. Positions 151 to 331 (GMPNYFGYQR…DGRYKDEEAQ (181 aa)) constitute a TRUD domain.

It belongs to the pseudouridine synthase TruD family.

It catalyses the reaction uridine(13) in tRNA = pseudouridine(13) in tRNA. Its function is as follows. Responsible for synthesis of pseudouridine from uracil-13 in transfer RNAs. The chain is tRNA pseudouridine synthase D from Sulfurimonas denitrificans (strain ATCC 33889 / DSM 1251) (Thiomicrospira denitrificans (strain ATCC 33889 / DSM 1251)).